We begin with the raw amino-acid sequence, 215 residues long: Peroxiredoxin 1 (215 aa).

Positions 2–158 (VKLYSKFPDV…LLRITKAAIV (157 aa)) constitute a Thioredoxin domain. The active-site Cysteine sulfenic acid (-SOH) intermediate is Cys-46. Residue Arg-121 participates in substrate binding.

Belongs to the peroxiredoxin family. Prx6 subfamily. In terms of assembly, homodecamer. Pentamer of dimers that assemble into a ring structure.

It is found in the cytoplasm. The enzyme catalyses a hydroperoxide + [thioredoxin]-dithiol = an alcohol + [thioredoxin]-disulfide + H2O. Its function is as follows. Thiol-specific peroxidase that catalyzes the reduction of hydrogen peroxide and organic hydroperoxides to water and alcohols, respectively. Plays a role in cell protection against oxidative stress by detoxifying peroxides. In Sulfurisphaera tokodaii (strain DSM 16993 / JCM 10545 / NBRC 100140 / 7) (Sulfolobus tokodaii), this protein is Peroxiredoxin 1.